Here is a 103-residue protein sequence, read N- to C-terminus: Large ribosomal subunit protein bL21 (103 aa).

Belongs to the bacterial ribosomal protein bL21 family. As to quaternary structure, part of the 50S ribosomal subunit. Contacts protein L20.

Its function is as follows. This protein binds to 23S rRNA in the presence of protein L20. This Haemophilus influenzae (strain PittEE) protein is Large ribosomal subunit protein bL21.